Reading from the N-terminus, the 336-residue chain is Pyridoxal 5'-phosphate synthase subunit PdxS (336 aa).

Asp-30 contributes to the D-ribose 5-phosphate binding site. Residue Lys-87 is the Schiff-base intermediate with D-ribose 5-phosphate of the active site. Gly-159 serves as a coordination point for D-ribose 5-phosphate. Arg-171 contributes to the D-glyceraldehyde 3-phosphate binding site. Residues Gly-257 and 278-279 (GS) contribute to the D-ribose 5-phosphate site.

This sequence belongs to the PdxS/SNZ family. In the presence of PdxT, forms a dodecamer of heterodimers.

It carries out the reaction aldehydo-D-ribose 5-phosphate + D-glyceraldehyde 3-phosphate + L-glutamine = pyridoxal 5'-phosphate + L-glutamate + phosphate + 3 H2O + H(+). It participates in cofactor biosynthesis; pyridoxal 5'-phosphate biosynthesis. Catalyzes the formation of pyridoxal 5'-phosphate from ribose 5-phosphate (RBP), glyceraldehyde 3-phosphate (G3P) and ammonia. The ammonia is provided by the PdxT subunit. Can also use ribulose 5-phosphate and dihydroxyacetone phosphate as substrates, resulting from enzyme-catalyzed isomerization of RBP and G3P, respectively. This is Pyridoxal 5'-phosphate synthase subunit PdxS from Thermoplasma volcanium (strain ATCC 51530 / DSM 4299 / JCM 9571 / NBRC 15438 / GSS1).